The following is a 547-amino-acid chain: Chaperonin GroEL (547 aa).

Residues 30 to 33 (TLGP), K51, 87 to 91 (DGTTT), G415, 479 to 481 (NAA), and D495 contribute to the ATP site.

It belongs to the chaperonin (HSP60) family. In terms of assembly, forms a cylinder of 14 subunits composed of two heptameric rings stacked back-to-back. Interacts with the co-chaperonin GroES.

The protein localises to the cytoplasm. It catalyses the reaction ATP + H2O + a folded polypeptide = ADP + phosphate + an unfolded polypeptide.. Together with its co-chaperonin GroES, plays an essential role in assisting protein folding. The GroEL-GroES system forms a nano-cage that allows encapsulation of the non-native substrate proteins and provides a physical environment optimized to promote and accelerate protein folding. The sequence is that of Chaperonin GroEL from Marinomonas sp. (strain MWYL1).